A 338-amino-acid polypeptide reads, in one-letter code: Sporulation protein YdcC (338 aa).

Residues 8–25 (FVLLLTGLLAVLILSACG) form a helical membrane-spanning segment.

The protein localises to the cell membrane. Required for efficient sporulation. The protein is Sporulation protein YdcC (ydcC) of Bacillus subtilis (strain 168).